The following is a 144-amino-acid chain: SsrA-binding protein (144 aa).

This sequence belongs to the SmpB family.

The protein localises to the cytoplasm. Required for rescue of stalled ribosomes mediated by trans-translation. Binds to transfer-messenger RNA (tmRNA), required for stable association of tmRNA with ribosomes. tmRNA and SmpB together mimic tRNA shape, replacing the anticodon stem-loop with SmpB. tmRNA is encoded by the ssrA gene; the 2 termini fold to resemble tRNA(Ala) and it encodes a 'tag peptide', a short internal open reading frame. During trans-translation Ala-aminoacylated tmRNA acts like a tRNA, entering the A-site of stalled ribosomes, displacing the stalled mRNA. The ribosome then switches to translate the ORF on the tmRNA; the nascent peptide is terminated with the 'tag peptide' encoded by the tmRNA and targeted for degradation. The ribosome is freed to recommence translation, which seems to be the essential function of trans-translation. The protein is SsrA-binding protein of Thermus thermophilus (strain ATCC BAA-163 / DSM 7039 / HB27).